Consider the following 1914-residue polypeptide: MSHLKLDTLHVQRSPRGSRRSSRSSGRSSACSSGSISPVPIIPIISISHDGDESESESEIETEPARLFQRRMSIKCTNNLAAIIKEGFLLKHTWSFQRWRRRYFRLKRNMLFYAKDEKCDVFDDIDLSDLCYFECGIKNVNHSFQIITPTRSLVLCAESRREMEDWLGSLKTATAPQRPRGDSFLIEQHDILSNHHHWYATSHARPTYCNVCRDALSGVTSHGLSCEVCKCKVHKRCAAKSIANCKWTTLASVGKDIIEQADGSIIMPHQWMEGNLPVSSMCAVCKKTCGSVLRLQDWRCLWCRATVHVACRPQMAVACPIGPAKLSVVPPTSVHSISTDDAWDVASPKGNFSPLLVFVNSKSGDNQGVKFLRRFKQLLNPAQVFDLISTGPSLGLRLFRHFEMFRILVCSGDGSVGWVLSEIDRFNMHKQCQVAVMPLGTGNDLARVLGWGSSCDDDTHLPQILERYESASTKMLDRWSIMVFEKAIPVPKTPKMSISTEQEAMLTGMVTSANHHLRFIVETNDTQTLISSTRNLCDTVDDLVCRISEHHKDDEQLAVKCDILRQKLNMLLDALQEEEIGAHSGDDLIATIRSLIARSIPVTPGSNAYLLNPNISIEKTEKDQINSKERRNSRSLRSSEKEALQCRANSVKRAIYNVVEHSEPGRPKRYQRKLSITPFEALKLPTNASGESTPCTSPLPIIPPINIISPTMETSRLTCISPLPDTRRDSVDENFFNSINLPAPRQFADSRRSSGVPEVIQEIEEGANGETVYRRSRMSLTGGANIDDAGNRLSPCSDGGENTPTERKLDFLRVPIHTGEPIVDPLCDYRPHEVFERNYYMTREMDKDKEKDKEKDKPVEIDIEKDTCVEKEGSMPEEKLVHTCNLQVPGVVVTPNPQNVYSSASITIIDTDAQTTTEQSSSDDLGGEASDVLSAISNEECSVASEIFDKQDAGQTVGDIIQNMDASNFTHIDSPETSDETEAMPGESIMDDISSVLGHDITYALQDNTLTDDTTTLCSEHVGPPKPPRKKSLSALSRTQAHPRRRNSSPPRIARLARMDSDDNPQQFGFENIVFEIDNRCDDQKMREPPRYCSLAQFVEGNDIARQSFKQLMLEQHRGGDNDSEYPEHQQTPTNKGANLLITTSEDELSTQTAIKIEIQDIDATVRNLNSSMKPNTILTTSTSPTKKSGHGQDISVVVRPPTPLRGDSTKPTVSLLPVSSGGAMAVSMTCSGMLGVRAMNASEIRRHSSHAPGLAVREFDKDKDRRHSGFNPNQLTLDPEHARFLSSSPAASRRISCGSLFKKKNKQIATKRSYGLFSVRFFVVAEPDFRLATLALIRPLIPLNEALPNLQTLKGSKSSLFMGSTLFGFDHLASAEKDKEEKGGKDKEKTPTEETNRKLPIINPLVRLPNWPLANGGGFISKCLLANADTLCAAVSPLMDPDETLLAGYHEKCVMNNYFGIGIDAKISLDFHNKREEHPEKCRSRARNYMWYGVLGSKQLLQKTCKNLEQRVQLECDGQRIPLPELQGIVILNIPSFMGGTNFWGSSTKKDDIFLPPSFDDRVLEVVAVFGSVQMAASRLINLQHHRIAQCQSVQINILGDEEIPIQVDGEAWLQPPGMIRILHKNRVQMLCRNRSLELSLKSWQEKQRQHSISIQRDASSTASEHANSTDEVISERECYVLLNFIEAVSSLVKWVKFLIISHPALQHDLYEVACRASEALESIHPQGKLLEGPSLRTKLVEVIDSSRQLYDDACTLLRDRGHSLILREDLETKLSAALANMEMELKKCSVQKCIDGKLRAYFNVLAPNEESDGRRKSRPFWVRLRSGSTAGQQAFKPPLTNTREAPNNWSVNEVVTWLETMQLSEYVDSFLKNDIRGKELLTLGRRDLKDLGVVKVGHVKRILQAIKDLSEN.

Over residues 1–10 (MSHLKLDTLH) the composition is skewed to basic and acidic residues. The segment at 1 to 37 (MSHLKLDTLHVQRSPRGSRRSSRSSGRSSACSSGSIS) is disordered. Residues 23 to 37 (RSSGRSSACSSGSIS) are compositionally biased toward low complexity. One can recognise a PH domain in the interval 82 to 175 (AIIKEGFLLK…WLGSLKTATA (94 aa)). 2 Phorbol-ester/DAG-type zinc fingers span residues 195–245 (HHHW…IANC) and 268–319 (PHQW…AVAC). Residues 350 to 486 (GNFSPLLVFV…DRWSIMVFEK (137 aa)) form the DAGKc domain. Disordered regions lie at residues 621-642 (EKDQ…SEKE), 783-805 (GANI…NTPT), 1016-1053 (TLCS…PPRI), 1116-1135 (QHRG…TPTN), and 1175-1216 (PNTI…TVSL). The span at 1175 to 1187 (PNTILTTSTSPTK) shows a compositional bias: polar residues. The region spanning 1851-1914 (WSVNEVVTWL…LQAIKDLSEN (64 aa)) is the SAM domain.

This sequence belongs to the eukaryotic diacylglycerol kinase family.

The protein localises to the cytoplasm. It catalyses the reaction a 1,2-diacyl-sn-glycerol + ATP = a 1,2-diacyl-sn-glycero-3-phosphate + ADP + H(+). In terms of biological role, phosphorylates diacylglycerol (DAG) to generate phosphatidic acid (PA). This chain is Diacylglycerol kinase eta, found in Drosophila sechellia (Fruit fly).